Consider the following 217-residue polypeptide: Tegument protein BKRF4 (217 aa).

Residues 1–217 are disordered; the sequence is MAMFLKSRGV…GNNNYNWPWL (217 aa). Over residues 32–42 the composition is skewed to polar residues; sequence YTLGSQASQSI. The span at 43–79 shows a compositional bias: acidic residues; that stretch reads QEEDVSDTDESDYSDEDEEIDLEEEYPSDEDPSEGSD. Positions 63-64 are interaction with host histones H3/H4; sequence DL. The segment at 81-84 is interaction with host H2A/H2B; that stretch reads DPSW. Residues 89 to 102 are compositionally biased toward acidic residues; the sequence is SDESDYSESDEDEA. Residues 106–132 show a composition bias toward low complexity; that stretch reads SQASRSSRVSPSTQQSSGLTPTPSFSR. Residues 136–145 show a composition bias toward pro residues; the sequence is RAPPRPPAPA. A compositionally biased stretch (polar residues) spans 208 to 217; sequence GNNNYNWPWL.

This sequence belongs to the lymphocryptovirus BKRF4 family. Forms a complex with the host H3/H4 dimer and histone chaperone ASF1. Also forms a complex with host H2A/H2B dimer. Interacts (via C-terminus) with BGLF2; this interaction is important for infectious virion production.

The protein localises to the virion tegument. It localises to the host nucleus. The protein resides in the host cytoplasm. It is found in the host perinuclear region. Its function is as follows. Histone-binding protein that binds to histones H2A/H2B, H3/H4 and cellular chromatin to overcome the host DNA damage response triggered by the viral genome ends. Interferes with histone ubiquitination and recruitment of repair proteins. The sequence is that of Tegument protein BKRF4 from Epstein-Barr virus (strain GD1) (HHV-4).